The primary structure comprises 248 residues: 14-3-3-like protein 1 (248 aa).

Belongs to the 14-3-3 family. In terms of assembly, interacts with daf-16 and sir-2.1. Interacts with atgl-1. Interacts with hcf-1.

The protein resides in the cytoplasm. It is found in the nucleus. Functionally, required to modulate lifespan, in concert with hcf-1, acting redundantly with 14-3-3-like protein ftt-2. The sequence is that of 14-3-3-like protein 1 (par-5) from Caenorhabditis elegans.